A 142-amino-acid chain; its full sequence is Large ribosomal subunit protein mL42 (142 aa).

A mitochondrion-targeting transit peptide spans methionine 1 to histidine 31.

Belongs to the mitochondrion-specific ribosomal protein mL42 family. As to quaternary structure, component of the mitochondrial ribosome large subunit (39S) which comprises a 16S rRNA and about 50 distinct proteins. Component of the mitochondrial ribosome small subunit (28S) which comprises a 12S rRNA and about 30 distinct proteins.

The protein localises to the mitochondrion. This chain is Large ribosomal subunit protein mL42 (Mrpl42), found in Mus musculus (Mouse).